The following is a 213-amino-acid chain: Imidazole glycerol phosphate synthase subunit HisH (213 aa).

The Glutamine amidotransferase type-1 domain maps to 1–212; the sequence is MLAILDYKAG…HRYCTEAADA (212 aa). Cysteine 79 functions as the Nucleophile in the catalytic mechanism. Residues histidine 187 and glutamate 189 contribute to the active site.

As to quaternary structure, heterodimer of HisH and HisF.

Its subcellular location is the cytoplasm. It carries out the reaction 5-[(5-phospho-1-deoxy-D-ribulos-1-ylimino)methylamino]-1-(5-phospho-beta-D-ribosyl)imidazole-4-carboxamide + L-glutamine = D-erythro-1-(imidazol-4-yl)glycerol 3-phosphate + 5-amino-1-(5-phospho-beta-D-ribosyl)imidazole-4-carboxamide + L-glutamate + H(+). The enzyme catalyses L-glutamine + H2O = L-glutamate + NH4(+). The protein operates within amino-acid biosynthesis; L-histidine biosynthesis; L-histidine from 5-phospho-alpha-D-ribose 1-diphosphate: step 5/9. IGPS catalyzes the conversion of PRFAR and glutamine to IGP, AICAR and glutamate. The HisH subunit catalyzes the hydrolysis of glutamine to glutamate and ammonia as part of the synthesis of IGP and AICAR. The resulting ammonia molecule is channeled to the active site of HisF. This Nitratidesulfovibrio vulgaris (strain ATCC 29579 / DSM 644 / CCUG 34227 / NCIMB 8303 / VKM B-1760 / Hildenborough) (Desulfovibrio vulgaris) protein is Imidazole glycerol phosphate synthase subunit HisH.